A 309-amino-acid chain; its full sequence is Dioxygenase af480 (309 aa).

Residues His153, Asp155, and His228 each coordinate Fe cation.

It belongs to the PhyH family. Fe cation serves as cofactor.

The enzyme catalyses 5-dehydro-6-demethoxyfumagillol + 2-oxoglutarate + O2 = 5-dehydro-6-demethoxy-6-hydroxyfumagillol + succinate + CO2. It participates in secondary metabolite biosynthesis; terpenoid biosynthesis. Its function is as follows. Dioxygenase; part of the gene cluster that mediates the biosynthesis of fumagillin, a meroterpenoid that has numerous biological activities including irreversible inhibition of human type 2 methionine aminopeptidase (METAP2). Within the pathway, the dioxygenase af480 acts as a 5-dehydro-6-demethoxyfumagillol dioxygenase that hydroylates 5-keto-demethoxyfumagillol at position C-6. The pathway begins with the conversion of farnesyl pyrophosphate (FPP) to beta-trans-bergamotene by the membrane-bound beta-trans-bergamotene synthase af520. The multifunctional cytochrome P450 monooxygenase af510 then converts beta-trans-bergamotene into 5-keto-demethoxyfumagillol via several oxydation steps. 5-keto-demethoxyfumagillol is then subjected to successive C-6 hydroxylation and O-methylation by the dioxygenase af480 and O-methyltransferase af390-400, respectively, to yield 5-keto-fumagillol, which is then stereoselectively reduced by the keto-reductase af490 to 5R-hydroxy-seco-sesquiterpene. The next step is the polyketide transferase af380-catalyzed transfer of a dodecapentaenoyl group synthesized by the polyketide synthase af370 onto 5R-hydroxy-seco-sesquiterpene which leads to the production of prefumagillin. Finally, oxidative cleavage by the monooxygenase af470 converts prefumagillin to fumagillin. The polypeptide is Dioxygenase af480 (Aspergillus fumigatus (strain ATCC MYA-4609 / CBS 101355 / FGSC A1100 / Af293) (Neosartorya fumigata)).